Consider the following 235-residue polypeptide: Adenosine 5'-phosphosulfate reductase (235 aa).

Cys-121, Cys-122, Cys-204, and Cys-207 together coordinate [4Fe-4S] cluster. Cys-230 (nucleophile; cysteine thiosulfonate intermediate) is an active-site residue.

This sequence belongs to the PAPS reductase family. CysH subfamily. [4Fe-4S] cluster is required as a cofactor.

It localises to the cytoplasm. The enzyme catalyses [thioredoxin]-disulfide + sulfite + AMP + 2 H(+) = adenosine 5'-phosphosulfate + [thioredoxin]-dithiol. The protein operates within sulfur metabolism; hydrogen sulfide biosynthesis; sulfite from sulfate. In terms of biological role, catalyzes the formation of sulfite from adenosine 5'-phosphosulfate (APS) using thioredoxin as an electron donor. This Geobacillus thermodenitrificans (strain NG80-2) protein is Adenosine 5'-phosphosulfate reductase.